The sequence spans 246 residues: 1-(5-phosphoribosyl)-5-[(5-phosphoribosylamino)methylideneamino] imidazole-4-carboxamide isomerase (246 aa).

Catalysis depends on aspartate 8, which acts as the Proton acceptor. The Proton donor role is filled by aspartate 130.

Belongs to the HisA/HisF family.

It localises to the cytoplasm. The enzyme catalyses 1-(5-phospho-beta-D-ribosyl)-5-[(5-phospho-beta-D-ribosylamino)methylideneamino]imidazole-4-carboxamide = 5-[(5-phospho-1-deoxy-D-ribulos-1-ylimino)methylamino]-1-(5-phospho-beta-D-ribosyl)imidazole-4-carboxamide. It participates in amino-acid biosynthesis; L-histidine biosynthesis; L-histidine from 5-phospho-alpha-D-ribose 1-diphosphate: step 4/9. The chain is 1-(5-phosphoribosyl)-5-[(5-phosphoribosylamino)methylideneamino] imidazole-4-carboxamide isomerase from Hydrogenovibrio crunogenus (strain DSM 25203 / XCL-2) (Thiomicrospira crunogena).